The sequence spans 296 residues: Outer surface protein B (296 aa).

Residues 1-15 (MRLLIGFALALALIG) form the signal peptide. Cys-16 carries the N-palmitoyl cysteine lipid modification. A lipid anchor (S-diacylglycerol cysteine) is attached at Cys-16. A disordered region spans residues 25–51 (GSQKENDLNLEDSSKKSHQNAKQDLPA). Residues 28 to 39 (KENDLNLEDSSK) show a composition bias toward basic and acidic residues.

The protein resides in the cell outer membrane. This is Outer surface protein B (ospB) from Borreliella burgdorferi (strain ATCC 35210 / DSM 4680 / CIP 102532 / B31) (Borrelia burgdorferi).